The following is a 484-amino-acid chain: tRNA sulfurtransferase (484 aa).

In terms of domain architecture, THUMP spans E63–R167. Residues L185–I186, K267, G289, and Q298 each bind ATP. C346 and C458 are joined by a disulfide. A Rhodanese domain is found at A406 to P484. The Cysteine persulfide intermediate role is filled by C458.

Belongs to the ThiI family.

Its subcellular location is the cytoplasm. It catalyses the reaction [ThiI sulfur-carrier protein]-S-sulfanyl-L-cysteine + a uridine in tRNA + 2 reduced [2Fe-2S]-[ferredoxin] + ATP + H(+) = [ThiI sulfur-carrier protein]-L-cysteine + a 4-thiouridine in tRNA + 2 oxidized [2Fe-2S]-[ferredoxin] + AMP + diphosphate. The enzyme catalyses [ThiS sulfur-carrier protein]-C-terminal Gly-Gly-AMP + S-sulfanyl-L-cysteinyl-[cysteine desulfurase] + AH2 = [ThiS sulfur-carrier protein]-C-terminal-Gly-aminoethanethioate + L-cysteinyl-[cysteine desulfurase] + A + AMP + 2 H(+). The protein operates within cofactor biosynthesis; thiamine diphosphate biosynthesis. Functionally, catalyzes the ATP-dependent transfer of a sulfur to tRNA to produce 4-thiouridine in position 8 of tRNAs, which functions as a near-UV photosensor. Also catalyzes the transfer of sulfur to the sulfur carrier protein ThiS, forming ThiS-thiocarboxylate. This is a step in the synthesis of thiazole, in the thiamine biosynthesis pathway. The sulfur is donated as persulfide by IscS. The protein is tRNA sulfurtransferase of Shewanella amazonensis (strain ATCC BAA-1098 / SB2B).